A 293-amino-acid chain; its full sequence is ATP synthase gamma chain (293 aa).

This sequence belongs to the ATPase gamma chain family. As to quaternary structure, F-type ATPases have 2 components, CF(1) - the catalytic core - and CF(0) - the membrane proton channel. CF(1) has five subunits: alpha(3), beta(3), gamma(1), delta(1), epsilon(1). CF(0) has three main subunits: a, b and c.

It localises to the cell inner membrane. In terms of biological role, produces ATP from ADP in the presence of a proton gradient across the membrane. The gamma chain is believed to be important in regulating ATPase activity and the flow of protons through the CF(0) complex. This Allorhizobium ampelinum (strain ATCC BAA-846 / DSM 112012 / S4) (Agrobacterium vitis (strain S4)) protein is ATP synthase gamma chain.